Consider the following 329-residue polypeptide: Gibberellin 2-beta-dioxygenase 1 (329 aa).

Positions 165–273 (NTDSILRLNH…RVSMIYFAGP (109 aa)) constitute a Fe2OG dioxygenase domain. Fe cation contacts are provided by H197, D199, and H254. The active site involves R264. R264 lines the 2-oxoglutarate pocket.

Belongs to the iron/ascorbate-dependent oxidoreductase family. GA2OX subfamily. The cofactor is Fe(2+). Preferentially expressed in flowers, siliques, and upper stems. Not expressed in the apex.

It carries out the reaction gibberellin A1 + 2-oxoglutarate + O2 = gibberellin A8 + succinate + CO2. The protein operates within plant hormone biosynthesis; gibberellin biosynthesis. Catalyzes the 2-beta-hydroxylation of several biologically active gibberellins, leading to the homeostatic regulation of their endogenous level. Catabolism of gibberellins (GAs) plays a central role in plant development. Converts GA9/GA20 to GA51/GA29 and GA4/GA1 to GA34/GA8. The polypeptide is Gibberellin 2-beta-dioxygenase 1 (GA2OX1) (Arabidopsis thaliana (Mouse-ear cress)).